A 228-amino-acid chain; its full sequence is MSQMPIELKGSSFTLSVVHLHDSQPEVIYQALQEKIEQAPAFLKNAPVVINVAALTAETDWIKLQQAISSTGLHVVGVSGCTDDALKKIIAQAGLPLLSEGKAQRRVVEPVAAVPAAVKTQIIDTPVRSGQQIYARNCDLIVTSNVSAGAEVIADGNIHIYGMMRGRALAGVSGDVQSQIFCTHLAAELVSIAGRYWLSDQVPEAYFGQPARINLNQLDNVLTIKPLD.

The protein belongs to the MinC family. In terms of assembly, interacts with MinD and FtsZ.

Cell division inhibitor that blocks the formation of polar Z ring septums. Rapidly oscillates between the poles of the cell to destabilize FtsZ filaments that have formed before they mature into polar Z rings. Prevents FtsZ polymerization. The sequence is that of Probable septum site-determining protein MinC from Pectobacterium atrosepticum (strain SCRI 1043 / ATCC BAA-672) (Erwinia carotovora subsp. atroseptica).